The chain runs to 559 residues: DNA ligase (559 aa).

Glu248 is an ATP binding site. Catalysis depends on Lys250, which acts as the N6-AMP-lysine intermediate. Arg255, Arg270, Glu300, Phe341, Arg417, and Lys423 together coordinate ATP.

This sequence belongs to the ATP-dependent DNA ligase family. Mg(2+) serves as cofactor.

It catalyses the reaction ATP + (deoxyribonucleotide)n-3'-hydroxyl + 5'-phospho-(deoxyribonucleotide)m = (deoxyribonucleotide)n+m + AMP + diphosphate.. Functionally, DNA ligase that seals nicks in double-stranded DNA during DNA replication, DNA recombination and DNA repair. The polypeptide is DNA ligase (Methanopyrus kandleri (strain AV19 / DSM 6324 / JCM 9639 / NBRC 100938)).